The primary structure comprises 311 residues: Malate dehydrogenase (311 aa).

NAD(+) is bound by residues 7–13 (GAAGGIG) and aspartate 34. Arginine 81 and arginine 87 together coordinate substrate. NAD(+) contacts are provided by residues asparagine 94 and 117–119 (ITN). Substrate contacts are provided by asparagine 119 and arginine 153. The active-site Proton acceptor is the histidine 177. NAD(+) is bound at residue methionine 227.

Belongs to the LDH/MDH superfamily. MDH type 1 family. As to quaternary structure, homodimer.

It catalyses the reaction (S)-malate + NAD(+) = oxaloacetate + NADH + H(+). Catalyzes the reversible oxidation of malate to oxaloacetate. This is Malate dehydrogenase from Haemophilus influenzae (strain PittEE).